A 200-amino-acid chain; its full sequence is Small ribosomal subunit protein uS4 (200 aa).

A disordered region spans residues Thr-22–Lys-43. Residues Gln-92–Glu-170 form the S4 RNA-binding domain.

Belongs to the universal ribosomal protein uS4 family. Part of the 30S ribosomal subunit. Contacts protein S5. The interaction surface between S4 and S5 is involved in control of translational fidelity.

In terms of biological role, one of the primary rRNA binding proteins, it binds directly to 16S rRNA where it nucleates assembly of the body of the 30S subunit. With S5 and S12 plays an important role in translational accuracy. The sequence is that of Small ribosomal subunit protein uS4 from Listeria monocytogenes serovar 1/2a (strain ATCC BAA-679 / EGD-e).